Reading from the N-terminus, the 622-residue chain is Threonine--tRNA ligase (622 aa).

The tract at residues 1–141 (MKTLLIHSDY…SRKITTERKE (141 aa)) is editing domain. Positions 199 to 498 (PHVKYIKEKE…TLENKPPALP (300 aa)) are catalytic. The Zn(2+) site is built by C291, H343, and H467.

The protein belongs to the class-II aminoacyl-tRNA synthetase family. Homodimer. Zn(2+) is required as a cofactor.

It is found in the cytoplasm. The enzyme catalyses tRNA(Thr) + L-threonine + ATP = L-threonyl-tRNA(Thr) + AMP + diphosphate + H(+). Functionally, catalyzes the attachment of threonine to tRNA(Thr) in a two-step reaction: L-threonine is first activated by ATP to form Thr-AMP and then transferred to the acceptor end of tRNA(Thr). Also edits incorrectly charged L-seryl-tRNA(Thr). This is Threonine--tRNA ligase from Methanococcus maripaludis (strain C7 / ATCC BAA-1331).